A 363-amino-acid chain; its full sequence is DNA polymerase IV (363 aa).

Residues 14–197 (IIHIDMDAFF…LPVEKFHGVG (184 aa)) form the UmuC domain. Mg(2+) contacts are provided by Asp18 and Asp115. The active site involves Glu116.

This sequence belongs to the DNA polymerase type-Y family. In terms of assembly, monomer. Mg(2+) is required as a cofactor.

It localises to the cytoplasm. It carries out the reaction DNA(n) + a 2'-deoxyribonucleoside 5'-triphosphate = DNA(n+1) + diphosphate. Functionally, poorly processive, error-prone DNA polymerase involved in untargeted mutagenesis. Copies undamaged DNA at stalled replication forks, which arise in vivo from mismatched or misaligned primer ends. These misaligned primers can be extended by PolIV. Exhibits no 3'-5' exonuclease (proofreading) activity. May be involved in translesional synthesis, in conjunction with the beta clamp from PolIII. The chain is DNA polymerase IV from Lactococcus lactis subsp. lactis (strain IL1403) (Streptococcus lactis).